The sequence spans 79 residues: MKLTCVLIISVLFLTASQLITAVYSRDKQQYRAARLRDEMRNLKGARDCGEQGQGCYTRPCCPGLECLGGGTGGGVCQP.

A signal peptide spans 1–22; that stretch reads MKLTCVLIISVLFLTASQLITA. Residues 23–47 constitute a propeptide that is removed on maturation; that stretch reads VYSRDKQQYRAARLRDEMRNLKGAR. Cystine bridges form between Cys49-Cys62, Cys56-Cys67, and Cys61-Cys77. 4-hydroxyproline is present on residues Pro60 and Pro63.

The protein belongs to the conotoxin O1 superfamily. Expressed by the venom duct.

Its subcellular location is the secreted. Its function is as follows. Ion channel inhibitor that inhibits the increase in intracellular calcium upon depolarization in DRG neurons. In vivo, both intraperitoneal and intracranial injections into mice induce hyperactivity. The protein is Conotoxin Kt6.1 of Conus kintoki (Cone snail).